Reading from the N-terminus, the 764-residue chain is Aconitate hydratase (764 aa).

Residue 75–77 (DSH) coordinates substrate. Residues Cys-307, Cys-372, and Cys-375 each contribute to the [4Fe-4S] cluster site. Residues Arg-405, Arg-410, Arg-568, and 648–649 (SR) contribute to the substrate site.

Belongs to the aconitase/IPM isomerase family. Requires [4Fe-4S] cluster as cofactor.

Its subcellular location is the cytoplasm. The enzyme catalyses citrate = D-threo-isocitrate. The protein operates within carbohydrate metabolism; glyoxylate and dicarboxylate metabolism. In terms of biological role, catalyzes the isomerization of citrate to isocitrate via cis-aconitate. The protein is Aconitate hydratase (ACO) of Cucumis melo var. conomon (Oriental pickling melon).